The sequence spans 379 residues: Anthranilate O-methyltransferase 3 (379 aa).

Residues 1-10 (MPMRIERDLH) show a composition bias toward basic and acidic residues. Residues 1 to 21 (MPMRIERDLHMATGNGETSYT) are disordered. Tyr-20 is an S-adenosyl-L-homocysteine binding site. Anthranilate is bound at residue Gln-27. Residues Cys-61, Asn-66, Asp-100, Leu-101, Ser-143, and Phe-144 each coordinate S-adenosyl-L-homocysteine. Positions 164 and 165 each coordinate anthranilate. 2 residues coordinate Mg(2+): Glu-265 and Phe-267.

The protein belongs to the methyltransferase superfamily. Type-7 methyltransferase family. SABATH subfamily.

The enzyme catalyses anthranilate + S-adenosyl-L-methionine = O-methyl anthranilate + S-adenosyl-L-homocysteine. The catalysed reaction is benzoate + S-adenosyl-L-methionine = methyl benzoate + S-adenosyl-L-homocysteine. It carries out the reaction salicylate + S-adenosyl-L-methionine = methyl salicylate + S-adenosyl-L-homocysteine. Methyltransferase involved in the biosynthesis of methyl anthranilate in response to stresses. Utilizes anthranilic acid as substrate. Produces exclusively the O-methyl ester. Can also use benzoic acid as substrate. Low activity with salicylic acid. In Zea mays (Maize), this protein is Anthranilate O-methyltransferase 3 (AAMT3).